Here is a 150-residue protein sequence, read N- to C-terminus: Globin-1 (150 aa).

The region spanning 11–150 (ALTAAEKATI…MICILLRSSY (140 aa)) is the Globin domain. Residues His74 and His106 each contribute to the heme b site.

This sequence belongs to the globin family. In terms of assembly, monomer.

The protein is Globin-1 of Petromyzon marinus (Sea lamprey).